A 113-amino-acid chain; its full sequence is Probable 4-amino-4-deoxy-L-arabinose-phosphoundecaprenol flippase subunit ArnE (113 aa).

3 helical membrane passes run 39–59, 62–82, and 91–111; these read IFWL…WLRL, ILPL…VTLI, and VNVK…LMSM. In terms of domain architecture, EamA spans 42-111; that stretch reads LITAIAMLGF…IMLGIVLMSM (70 aa).

It belongs to the ArnE family. In terms of assembly, heterodimer of ArnE and ArnF.

The protein localises to the cell inner membrane. The protein operates within bacterial outer membrane biogenesis; lipopolysaccharide biosynthesis. Translocates 4-amino-4-deoxy-L-arabinose-phosphoundecaprenol (alpha-L-Ara4N-phosphoundecaprenol) from the cytoplasmic to the periplasmic side of the inner membrane. The sequence is that of Probable 4-amino-4-deoxy-L-arabinose-phosphoundecaprenol flippase subunit ArnE from Proteus mirabilis (strain HI4320).